We begin with the raw amino-acid sequence, 501 residues long: Glycerol kinase (501 aa).

Thr14 provides a ligand contact to ADP. ATP contacts are provided by Thr14, Thr15, and Ser16. Thr14 is a binding site for sn-glycerol 3-phosphate. Arg18 serves as a coordination point for ADP. Sn-glycerol 3-phosphate is bound by residues Arg84, Glu85, and Tyr136. Residues Arg84, Glu85, and Tyr136 each coordinate glycerol. Residue His231 is modified to Phosphohistidine; by HPr. Asp245 lines the sn-glycerol 3-phosphate pocket. Residues Asp245 and Gln246 each coordinate glycerol. Residues Thr267 and Gly310 each coordinate ADP. Thr267, Gly310, Gln314, and Gly411 together coordinate ATP. ADP-binding residues include Gly411 and Asn415.

The protein belongs to the FGGY kinase family. Homotetramer and homodimer (in equilibrium). Post-translationally, the phosphoenolpyruvate-dependent sugar phosphotransferase system (PTS), including enzyme I, and histidine-containing protein (HPr) are required for the phosphorylation of His-231, which leads to the activation of the enzyme.

The enzyme catalyses glycerol + ATP = sn-glycerol 3-phosphate + ADP + H(+). Its pathway is polyol metabolism; glycerol degradation via glycerol kinase pathway; sn-glycerol 3-phosphate from glycerol: step 1/1. Activated by phosphorylation and inhibited by fructose 1,6-bisphosphate (FBP). Functionally, key enzyme in the regulation of glycerol uptake and metabolism. Catalyzes the phosphorylation of glycerol to yield sn-glycerol 3-phosphate. This Enterococcus faecalis (strain ATCC 700802 / V583) protein is Glycerol kinase.